The sequence spans 146 residues: Putative ankyrin repeat protein FPV224 (146 aa).

4 ANK repeats span residues 9–38 (SLSTPLHHAINLLKTDIVSLLMQYKADASI), 42–79 (KGITPFCYAMYLGYYGVNKDILNIITRYNSINGTTRDI), 94–126 (YVFVNLHDAARLGYVYILKKIIYNGKNINRIDE), and 127–145 (YYYSALHYAVKSSNLKAVN).

This chain is Putative ankyrin repeat protein FPV224, found in Fowlpox virus (strain NVSL) (FPV).